A 1004-amino-acid polypeptide reads, in one-letter code: MPTRNLLLGSILLSLAVKGDPGPHRGARCGVSPLGSATELNYLSRIVGGRESKKGQHPWTVSLKRNGKHFCGGTLVSHCHVLTAAHCLLDRNVKLYMRVYIGEYDQILKEETEQMFRVIEIFKHPNFNQSQPMNYDVAVLLLDGSVTFDENIQPACLPNPDDVFEPGDLCVTLGWGHLTENGILPVVLQEVYLPIVDLSSCLHVMSALKGTVVSSYIVCAGFPEGGKDACQGDSGGPLLCQRRHGSWVLHGLTSWGMGCGRSWKNNVFLPHNRKGSPGIFTDIQKLLGWVSSQLNTAVPNKNQESCSMQDGVLSGKSGELIFLKNPMSVTRTMSGAPGFSLSLKTCTSCLNFTHLDIESDFACNLDYLAIYTDSHRLIGKFCGDIPPRSLLISFSSIKLNFFSDFHENRTGFVLYYSAVEPNTYPDSGCGSFAVLFEEGEIQSMNYPENYLSNSRCHWIIHGPSGSYIKLQFEDFALEPSDDCRSDYLAVYQDLAAEDKIETFCGFSLPAPVYSTTAVMHIKFSTDERDNDKGFRATFTFVSPNSLVEDSRQGNMPSTNKKETTAQDSICGVSQVPPIFIYNSIAKVEEAVPHSWPWHTSLQYAGEHVCDGAIIAENWILTTASCVLNRKFNDVWLVDPGIHDLLRPGHNQKGLVKQIIPHPSFSSQTNDFDIALVELDESLQFNSDIFPICLPGKTSELAPASLCVVSGWSLRGKEAEKSTKLQQREVPILTDDACSAHYIQNPGGITDRMLCAGIGTGQDNDSCSEQSGSPLVCLLEKKGIYTIFGIASWGVNCKENSKPGIYTKVSPFIDWIRQIMSDTGQIHSNLGDPKPHPMGNIEPEETAGRDIIQGGFPTNDASSNQNLYIASSCEDVVLLQSPGEIKMETKSQMYPNGFSCQWRIIAPKFQIIKLVMKQVHMSAENGKCCNSLIIYEGISKNKTLKVRFPTDEMVPGTVWSEGSSVTIESPPHPVDPEFGFCLVYSFHSRTQSQDHVVPDSDSSEP.

Residues 1 to 19 (MPTRNLLLGSILLSLAVKG) form the signal peptide. Residues 20–45 (DPGPHRGARCGVSPLGSATELNYLSR) constitute a propeptide, activation peptide. Positions 46 to 295 (IVGGRESKKG…LLGWVSSQLN (250 aa)) constitute a Peptidase S1 1 domain. A disulfide bond links cysteine 71 and cysteine 87. The Charge relay system role is filled by histidine 86. Glutamate 113 contributes to the Ca(2+) binding site. N-linked (GlcNAc...) asparagine glycosylation is present at asparagine 128. Catalysis depends on aspartate 136, which acts as the Charge relay system. 3 disulfide bridges follow: cysteine 170–cysteine 240, cysteine 201–cysteine 219, and cysteine 230–cysteine 259. The active-site Charge relay system is serine 234. CUB domains are found at residues 309-419 (QDGV…YSAV) and 429-541 (CGSF…FTFV). N-linked (GlcNAc...) asparagine glycosylation occurs at asparagine 351. Cysteines 363 and 382 form a disulfide. An N-linked (GlcNAc...) asparagine glycan is attached at asparagine 408. Cystine bridges form between cysteine 429/cysteine 456 and cysteine 483/cysteine 504. The span at 547 to 558 (VEDSRQGNMPST) shows a compositional bias: polar residues. The segment at 547–566 (VEDSRQGNMPSTNKKETTAQ) is disordered. The Peptidase S1 2 domain occupies 580 to 820 (IYNSIAKVEE…FIDWIRQIMS (241 aa)). Residues 584 to 1004 (IAKVEEAVPH…VVPDSDSSEP (421 aa)) constitute a propeptide, activation peptide. 4 disulfides stabilise this stretch: cysteine 609–cysteine 625, cysteine 706–cysteine 776, cysteine 737–cysteine 754, and cysteine 766–cysteine 796. N-linked (GlcNAc...) asparagine glycosylation is present at asparagine 763. N-linked (GlcNAc...) asparagine glycosylation occurs at asparagine 940.

Belongs to the peptidase S1 family. Post-translationally, the catalytically inactive 110 kDa form is processed both N- and C-terminally to give rise to the 66 kDa catalytically active form. Specifically expressed in the pars recta oviduct.

It localises to the secreted. The catalysed reaction is Preferential cleavage at 371-Gly-Ser-Arg-|-Trp-374 of glycoprotein gp43 in Xenopus laevis coelemic egg envelope to yield gp41.. In terms of biological role, converts the glycoprotein envelope surrounding the egg from an unfertilizable to a fertilizable form during its transit through the pars recta portion of the oviduct by selectively hydrolyzing the envelope glycoprotein gp43. The egg envelope is converted to a sperm-penetrable form, via an increase in sperm binding. In Xenopus laevis (African clawed frog), this protein is Ovochymase-2 (ovch2).